The sequence spans 111 residues: Small ribosomal subunit protein bS18 (111 aa).

A disordered region spans residues 1–32 (MDLENTENVENNNNNEEEVKAKGERKAHFNKE). A compositionally biased stretch (basic and acidic residues) spans 17 to 32 (EEVKAKGERKAHFNKE).

This sequence belongs to the bacterial ribosomal protein bS18 family. Part of the 30S ribosomal subunit. Forms a tight heterodimer with protein bS6.

Its function is as follows. Binds as a heterodimer with protein bS6 to the central domain of the 16S rRNA, where it helps stabilize the platform of the 30S subunit. This chain is Small ribosomal subunit protein bS18, found in Brachyspira hyodysenteriae (strain ATCC 49526 / WA1).